Reading from the N-terminus, the 538-residue chain is Chaperonin GroEL 1 (538 aa).

Residues 29–32 (TLGP), 86–90 (DGTTT), Gly-413, 478–480 (NAA), and Asp-494 contribute to the ATP site.

The protein belongs to the chaperonin (HSP60) family. In terms of assembly, forms a cylinder of 14 subunits composed of two heptameric rings stacked back-to-back. Interacts with the co-chaperonin GroES.

It localises to the cytoplasm. The enzyme catalyses ATP + H2O + a folded polypeptide = ADP + phosphate + an unfolded polypeptide.. In terms of biological role, together with its co-chaperonin GroES, plays an essential role in assisting protein folding. The GroEL-GroES system forms a nano-cage that allows encapsulation of the non-native substrate proteins and provides a physical environment optimized to promote and accelerate protein folding. The polypeptide is Chaperonin GroEL 1 (Corynebacterium glutamicum (strain ATCC 13032 / DSM 20300 / JCM 1318 / BCRC 11384 / CCUG 27702 / LMG 3730 / NBRC 12168 / NCIMB 10025 / NRRL B-2784 / 534)).